A 350-amino-acid chain; its full sequence is Phosphotriesterase-related protein (350 aa).

A divalent metal cation-binding residues include His22, His24, Glu169, His201, His230, and Asp298.

This sequence belongs to the metallo-dependent hydrolases superfamily. Phosphotriesterase family. Requires a divalent metal cation as cofactor.

The protein is Phosphotriesterase-related protein of Drosophila yakuba (Fruit fly).